Consider the following 377-residue polypeptide: NADH dehydrogenase [ubiquinone] 1 alpha subcomplex subunit 9, mitochondrial (377 aa).

A mitochondrion-targeting transit peptide spans Met-1–Gln-35. An N6-succinyllysine modification is found at Lys-175. 2 positions are modified to N6-acetyllysine: Lys-189 and Lys-370.

The protein belongs to the complex I NDUFA9 subunit family. In terms of assembly, complex I is composed of 45 different subunits. This a component of the hydrophobic protein fraction. Interacts with BLOC1S1. Interacts with SLC2A4. Interacts with CLOCK. Interacts with RAB5IF. Requires FAD as cofactor. Acetylated on lysine residues. BLOC1S1 is required for acetylation.

It localises to the mitochondrion matrix. Its function is as follows. Accessory subunit of the mitochondrial membrane respiratory chain NADH dehydrogenase (Complex I), that is believed not to be involved in catalysis. Complex I functions in the transfer of electrons from NADH to the respiratory chain. The immediate electron acceptor for the enzyme is believed to be ubiquinone. In Gorilla gorilla gorilla (Western lowland gorilla), this protein is NADH dehydrogenase [ubiquinone] 1 alpha subcomplex subunit 9, mitochondrial (NDUFA9).